Reading from the N-terminus, the 468-residue chain is Neuronal acetylcholine receptor subunit alpha-5 (468 aa).

The first 22 residues, 1–22, serve as a signal peptide directing secretion; that stretch reads MAARGSGPRALRLLLLVQLVAG. The Extracellular portion of the chain corresponds to 23-254; it reads RCGLAGAAGG…VIKRLPLFYT (232 aa). Residues asparagine 155, asparagine 183, and asparagine 229 are each glycosylated (N-linked (GlcNAc...) asparagine). A disulfide bond links cysteine 170 and cysteine 184. Cysteines 234 and 235 form a disulfide. The next 3 membrane-spanning stretches (helical) occupy residues 255-275, 282-302, and 317-337; these read LFLIIPCIGLSFLTVLVFYLP, ICLCTSVLVSLTVFLLVIEEI, and LVFTMIFVTLSIMVTVFAINI. At 338-429 the chain is on the cytoplasmic side; sequence HHRSSSTHNA…WKFIAQVLDR (92 aa). Residues 430-451 traverse the membrane as a helical segment; that stretch reads MFLWTFLFVSIVGSLGLFVPVI. The Extracellular portion of the chain corresponds to 452–468; the sequence is YKWANILIPVHIGNANK.

This sequence belongs to the ligand-gated ion channel (TC 1.A.9) family. Acetylcholine receptor (TC 1.A.9.1) subfamily. Alpha-5/CHRNA5 sub-subfamily. As to quaternary structure, neuronal AChR that forms heteropentamers composed of two different type of subunits: alpha and non-alpha (beta). CHRNA5/alpha-5 subunit is only able to form functional nAChRs when co-assembled with another alpha subunit, can be combined to CHRNA4/alpha-4 or CHRNA3/alpha-3 and CHRNB4/beta-4 or CHRNB2/beta-2 to give rise to functional receptors. Interacts with LYPD6.

It is found in the synaptic cell membrane. Its subcellular location is the cell membrane. It carries out the reaction Ca(2+)(in) = Ca(2+)(out). The enzyme catalyses K(+)(in) = K(+)(out). The catalysed reaction is Na(+)(in) = Na(+)(out). Activated by a myriad of ligands such as acetylcholine, cytisine, nicotine, choline and epibatidine. Component of neuronal acetylcholine receptors (nAChRs) that function as pentameric, ligand-gated cation channels with high calcium permeability among other activities. nAChRs are excitatory neurotrasnmitter receptors formed by a collection of nAChR subunits known to mediate synaptic transmission in the nervous system and the neuromuscular junction. Each nAchR subunit confers differential attributes to channel properties, including activation, deactivation and desensitization kinetics, pH sensitivity, cation permeability, and binding to allosteric modulators. Has an accessory rather than functional role and is only able to form functional nAChRs when co-assembled with another beta subunit. Participates in pentameric assemblies along with CHRNA3, CHRNA4, CHRNB2 and CHRNB4. Increases receptor sensitivity to acetylcholine and nicotine when associated with CHRNA4 and CHRNB2. Plays a role in nicotine addiction. The chain is Neuronal acetylcholine receptor subunit alpha-5 from Homo sapiens (Human).